The following is a 344-amino-acid chain: uncharacterized protein (344 aa).

Topologically, residues 1-98 are cytoplasmic; that stretch reads MIDFVKSRDT…NNDEIGIWNY (98 aa). Residues 99 to 119 traverse the membrane as a helical segment; the sequence is ISVAEMGGVLLFLSYWIWTCL. Histidine 120 is a topological domain (lumenal). Residues 121 to 141 traverse the membrane as a helical segment; the sequence is FSKIIFPAQKVICLYIFLFAL. At 142–169 the chain is on the cytoplasmic side; that stretch reads NQTLQECIEEYVFSSECIKYRQFYSVYE. The helical transmembrane segment at 170-192 threads the bilayer; that stretch reads IIDFLRTNFYRLFVIYCALGFGI. Residues 193-198 are Lumenal-facing; the sequence is TRTVPK. A helical membrane pass occupies residues 199–219; the sequence is YLMIKGISIVIALCSVYWISL. Topologically, residues 220 to 222 are cytoplasmic; that stretch reads YKD. Residues 223–243 form a helical membrane-spanning segment; sequence VYVVSEIFDMIQYEVFPAIWV. Residues 244-273 lie on the Lumenal side of the membrane; sequence YSICHLLKQCTSVTTYENASKARFFRRMLN. The chain crosses the membrane as a helical span at residues 274-294; sequence AFIFIFCASPMLHYLSNIIFG. Residues 295-344 lie on the Cytoplasmic side of the membrane; it reads NFDYRLSVIIGDLFTFMEKIAFPCYIMFPTHNEALAYNRNVAEEAQEKMI.

It localises to the endoplasmic reticulum membrane. This is an uncharacterized protein from Schizosaccharomyces pombe (strain 972 / ATCC 24843) (Fission yeast).